The primary structure comprises 243 residues: Hydroxyacylglutathione hydrolase (243 aa).

Residues His59, His61, Asp63, His64, His117, Asp135, and His173 each contribute to the Zn(2+) site.

The protein belongs to the metallo-beta-lactamase superfamily. Glyoxalase II family. In terms of assembly, monomer. It depends on Zn(2+) as a cofactor.

It catalyses the reaction an S-(2-hydroxyacyl)glutathione + H2O = a 2-hydroxy carboxylate + glutathione + H(+). The protein operates within secondary metabolite metabolism; methylglyoxal degradation; (R)-lactate from methylglyoxal: step 2/2. Its function is as follows. Thiolesterase that catalyzes the hydrolysis of S-D-lactoyl-glutathione to form glutathione and D-lactic acid. The polypeptide is Hydroxyacylglutathione hydrolase (Acidiphilium cryptum (strain JF-5)).